The primary structure comprises 249 residues: Putative TrmH family tRNA/rRNA methyltransferase (249 aa).

Positions 196, 216, and 225 each coordinate S-adenosyl-L-methionine.

Belongs to the class IV-like SAM-binding methyltransferase superfamily. RNA methyltransferase TrmH family.

The protein is Putative TrmH family tRNA/rRNA methyltransferase of Staphylococcus saprophyticus subsp. saprophyticus (strain ATCC 15305 / DSM 20229 / NCIMB 8711 / NCTC 7292 / S-41).